Consider the following 94-residue polypeptide: DNA-directed RNA polymerase subunit Rpo11 (94 aa).

The protein belongs to the archaeal Rpo11/eukaryotic RPB11/RPC19 RNA polymerase subunit family. Part of the RNA polymerase complex.

The protein resides in the cytoplasm. The catalysed reaction is RNA(n) + a ribonucleoside 5'-triphosphate = RNA(n+1) + diphosphate. Its function is as follows. DNA-dependent RNA polymerase (RNAP) catalyzes the transcription of DNA into RNA using the four ribonucleoside triphosphates as substrates. The polypeptide is DNA-directed RNA polymerase subunit Rpo11 (Haloarcula marismortui (strain ATCC 43049 / DSM 3752 / JCM 8966 / VKM B-1809) (Halobacterium marismortui)).